We begin with the raw amino-acid sequence, 896 residues long: Zinc finger protein 574 (896 aa).

3 consecutive C2H2-type zinc fingers follow at residues Tyr16–His38, Tyr76–His98, and Tyr126–His148. Ser164 carries the post-translational modification Phosphoserine. The C2H2-type 4 zinc-finger motif lies at Tyr214–His236. A compositionally biased stretch (low complexity) spans Val259–Ser272. A disordered region spans residues Val259–Gly303. Positions His274–Asp287 are enriched in basic and acidic residues. Ser298 bears the Phosphoserine mark. 4 C2H2-type zinc fingers span residues Leu309–His331, Phe336–His358, Phe364–His386, and His392–His413. A disordered region spans residues Phe434–Pro460. 6 C2H2-type zinc fingers span residues Tyr466–His489, His495–His517, Phe523–His545, Tyr551–His573, Tyr579–His601, and Tyr607–His630. A C2H2-type 15; degenerate zinc finger spans residues His636–Ala659. The C2H2-type 16 zinc-finger motif lies at Phe667–His689. Residues Ala687–Ala733 form a disordered region. Residues Ala707–Pro732 are compositionally biased toward low complexity. Position 717 is a phosphoserine (Ser717). 4 consecutive C2H2-type zinc fingers follow at residues Leu738–His760, Tyr766–His788, Phe794–His816, and Tyr822–His844. An Asymmetric dimethylarginine modification is found at Arg832.

The protein belongs to the krueppel C2H2-type zinc-finger protein family.

Its subcellular location is the nucleus. May be involved in transcriptional regulation. This is Zinc finger protein 574 (ZNF574) from Bos taurus (Bovine).